The primary structure comprises 313 residues: 1-phosphofructokinase (313 aa).

Residues 222–227 (SMGAKG) and 254–255 (GD) contribute to the ATP site. Aspartate 255 functions as the Proton acceptor in the catalytic mechanism.

It belongs to the carbohydrate kinase PfkB family.

It carries out the reaction beta-D-fructose 1-phosphate + ATP = beta-D-fructose 1,6-bisphosphate + ADP + H(+). Functionally, catalyzes the ATP-dependent phosphorylation of fructose-l-phosphate to fructose-l,6-bisphosphate. The chain is 1-phosphofructokinase (fruK) from Haemophilus influenzae (strain ATCC 51907 / DSM 11121 / KW20 / Rd).